A 946-amino-acid chain; its full sequence is DDB1- and CUL4-associated factor 5 (946 aa).

WD repeat units lie at residues 51–91, 99–139, 140–180, 185–225, 277–317, and 331–370; these read GHFG…HSRV, EHHS…LDVF, AHED…HGEP, NYPS…SSLL, FNSC…EAGG, and GHRS…GCTG. The disordered stretch occupies residues 449–478; that stretch reads GVSERSGYTDSESSASLPRSPPPTVDESAD. The span at 454–465 shows a compositional bias: polar residues; the sequence is SGYTDSESSASL. T500 is subject to Phosphothreonine. Disordered stretches follow at residues 527–656, 675–860, and 894–946; these read LSNE…MESV, SNNK…ELET, and CETP…KLKT. Phosphoserine occurs at positions 531 and 533. Over residues 531–544 the composition is skewed to acidic residues; that stretch reads SDSEENVCEAELDT. Positions 555–567 are enriched in low complexity; that stretch reads PEDGSSSPSSSTS. The segment covering 579-592 has biased composition (basic residues); it reads ATTRQRNAMRRRQK. Positions 625-638 are enriched in low complexity; that stretch reads LSPSPDSSPERSAS. S626, S628, and S645 each carry phosphoserine. Over residues 691–701 the composition is skewed to basic and acidic residues; it reads EGRAGTSHKDN. Polar residues-rich tracts occupy residues 760 to 769 and 808 to 819; these read GTSQDTNNSG and TLNSASGNCPRT.

In terms of assembly, interacts with DDB1, CUL4A or CUL4B. Interacts with L3MBTL3. Interacts with SOX2. Interacts with DNMT1. Interacts with E2F1.

It participates in protein modification; protein ubiquitination. Its function is as follows. Is a substrate receptor for the CUL4-DDB1 E3 ubiquitin-protein ligase complex (CRL4), involved in the ubiquitination of a set of methylated non-histone proteins, including SOX2. The complex CRL4-DCAF5 is also involved in the ubiquitination of methylated DNMT1 and E2F1. The protein is DDB1- and CUL4-associated factor 5 (Dcaf5) of Mus musculus (Mouse).